Consider the following 282-residue polypeptide: 4-diphosphocytidyl-2-C-methyl-D-erythritol kinase (282 aa).

Lys8 is a catalytic residue. Residue 91-101 participates in ATP binding; that stretch reads PVAAGLAGGST. Asp133 is an active-site residue.

The protein belongs to the GHMP kinase family. IspE subfamily.

It catalyses the reaction 4-CDP-2-C-methyl-D-erythritol + ATP = 4-CDP-2-C-methyl-D-erythritol 2-phosphate + ADP + H(+). The protein operates within isoprenoid biosynthesis; isopentenyl diphosphate biosynthesis via DXP pathway; isopentenyl diphosphate from 1-deoxy-D-xylulose 5-phosphate: step 3/6. In terms of biological role, catalyzes the phosphorylation of the position 2 hydroxy group of 4-diphosphocytidyl-2C-methyl-D-erythritol. In Symbiobacterium thermophilum (strain DSM 24528 / JCM 14929 / IAM 14863 / T), this protein is 4-diphosphocytidyl-2-C-methyl-D-erythritol kinase.